A 155-amino-acid polypeptide reads, in one-letter code: Probable Brix domain-containing ribosomal biogenesis protein (155 aa).

Residues 1-155 form the Brix domain; it reads MLITSSRKPS…KNYRKMVMSE (155 aa).

In terms of biological role, probably involved in the biogenesis of the ribosome. This chain is Probable Brix domain-containing ribosomal biogenesis protein, found in Methanococcoides burtonii (strain DSM 6242 / NBRC 107633 / OCM 468 / ACE-M).